Consider the following 159-residue polypeptide: Troponin C, skeletal muscle (159 aa).

An N-acetylthreonine modification is found at threonine 1. EF-hand domains are found at residues 14-49 (EMIA…LGQT), 50-85 (PTKE…QMKE), 90-125 (KSEE…SGEH), and 126-159 (VTDE…EGVQ). The Ca(2+) site is built by aspartate 27, aspartate 29, aspartate 33, glutamate 38, aspartate 63, aspartate 65, serine 67, threonine 69, glutamate 74, aspartate 103, asparagine 105, aspartate 107, tyrosine 109, glutamate 114, aspartate 139, asparagine 141, aspartate 143, arginine 145, and glutamate 150.

The protein belongs to the troponin C family.

In terms of biological role, troponin is the central regulatory protein of striated muscle contraction. Tn consists of three components: Tn-I which is the inhibitor of actomyosin ATPase, Tn-T which contains the binding site for tropomyosin and Tn-C. The binding of calcium to Tn-C abolishes the inhibitory action of Tn on actin filaments. The sequence is that of Troponin C, skeletal muscle (TNNC2) from Sus scrofa (Pig).